The sequence spans 647 residues: Pre-mRNA-splicing factor SLU7 (647 aa).

Over residues 1–19 (MASYKQNLPPSALIKQQVN) the composition is skewed to polar residues. Residues 1-44 (MASYKQNLPPSALIKQQVNVADKKSKAEVQRDRQLEEDRKAGTA) are disordered. A compositionally biased stretch (basic and acidic residues) spans 21–41 (ADKKSKAEVQRDRQLEEDRKA). A CCHC-type zinc finger spans residues 113–130 (GACENCGAMGHQKRDCFD). Disordered stretches follow at residues 193–212 (HEMK…APKD) and 465–620 (EVKE…KEME). The span at 465–479 (EVKEEKEKEDSIKDE) shows a compositional bias: basic and acidic residues. Residues 480–491 (VAEENSDNDNDE) are compositionally biased toward acidic residues. Over residues 513–533 (EKEREKERLIEKERRERDQRR) the composition is skewed to basic and acidic residues. A compositionally biased stretch (basic residues) spans 534–555 (RDKKREKRERKKAKLGKRKRRH). Residues 588-606 (EKAEGMKAAREGDRGRKYN) are compositionally biased toward basic and acidic residues.

This sequence belongs to the SLU7 family.

It localises to the nucleus. Its function is as follows. Participates in the second catalytic step of pre-mRNA splicing, when the free hydroxyl group of exon I attacks the 3'-splice site to generate spliced mRNA and the excised lariat intron. In Caenorhabditis elegans, this protein is Pre-mRNA-splicing factor SLU7.